A 141-amino-acid polypeptide reads, in one-letter code: Hemoglobin subunit alpha-D (141 aa).

Residues 1–141 enclose the Globin domain; sequence MLTAEDKKLI…VAAVLAEKYR (141 aa). The heme b site is built by H58 and H87.

The protein belongs to the globin family. In terms of assembly, heterotetramer of two alpha-D chains and two beta chains. In terms of tissue distribution, red blood cells.

Involved in oxygen transport from the lung to the various peripheral tissues. In Cairina moschata (Muscovy duck), this protein is Hemoglobin subunit alpha-D (HBAD).